We begin with the raw amino-acid sequence, 106 residues long: MAQAFVNSKIQPGKVVVFIKPTCPYCRKTQELLSQLPFKQGLLEFVDITAAGNISEIQDYLQQLTGARTVPRVFIGQECIGGCTDLVNMHERGELLTRLKQMGALQ.

An N-acetylalanine modification is found at Ala2. The Glutaredoxin domain maps to 3–106 (QAFVNSKIQP…TRLKQMGALQ (104 aa)). Position 9 is an N6-succinyllysine (Lys9). Intrachain disulfides connect Cys23-Cys26 and Cys79-Cys83.

This sequence belongs to the glutaredoxin family.

The protein localises to the cytoplasm. Functionally, has a glutathione-disulfide oxidoreductase activity in the presence of NADPH and glutathione reductase. Reduces low molecular weight disulfides and proteins. This is Glutaredoxin-1 (GLRX) from Bos taurus (Bovine).